A 401-amino-acid polypeptide reads, in one-letter code: Exodeoxyribonuclease 7 large subunit (401 aa).

The protein belongs to the XseA family. In terms of assembly, heterooligomer composed of large and small subunits.

Its subcellular location is the cytoplasm. The enzyme catalyses Exonucleolytic cleavage in either 5'- to 3'- or 3'- to 5'-direction to yield nucleoside 5'-phosphates.. Bidirectionally degrades single-stranded DNA into large acid-insoluble oligonucleotides, which are then degraded further into small acid-soluble oligonucleotides. The protein is Exodeoxyribonuclease 7 large subunit of Syntrophotalea carbinolica (strain DSM 2380 / NBRC 103641 / GraBd1) (Pelobacter carbinolicus).